The chain runs to 306 residues: D-alanine--D-alanine ligase (306 aa).

The ATP-grasp domain occupies 101 to 303; sequence KQVWQAVGLP…FSQLVVKILE (203 aa). 134 to 189 provides a ligand contact to ATP; that stretch reads FTHLGLPLIVKPSREGSSVGMSKVNTLSELPAALEEAFRHDDDILVEKWLSGPEYT. Positions 257, 270, and 272 each coordinate Mg(2+).

This sequence belongs to the D-alanine--D-alanine ligase family. Mg(2+) is required as a cofactor. Mn(2+) serves as cofactor.

The protein resides in the cytoplasm. The catalysed reaction is 2 D-alanine + ATP = D-alanyl-D-alanine + ADP + phosphate + H(+). It participates in cell wall biogenesis; peptidoglycan biosynthesis. Its function is as follows. Cell wall formation. The chain is D-alanine--D-alanine ligase from Pectobacterium carotovorum subsp. carotovorum (strain PC1).